Here is a 240-residue protein sequence, read N- to C-terminus: Dihydromonapterin reductase (240 aa).

Tyr152 acts as the Proton acceptor in catalysis.

Belongs to the short-chain dehydrogenases/reductases (SDR) family. FolM subfamily.

The catalysed reaction is (6S)-5,6,7,8-tetrahydrofolate + NADP(+) = 7,8-dihydrofolate + NADPH + H(+). It catalyses the reaction 7,8-dihydromonapterin + NADPH + H(+) = 5,6,7,8-tetrahydromonapterin + NADP(+). Its function is as follows. Catalyzes the reduction of dihydromonapterin to tetrahydromonapterin. Also has lower activity with dihydrofolate. The sequence is that of Dihydromonapterin reductase (folM) from Escherichia coli O6:K15:H31 (strain 536 / UPEC).